Consider the following 383-residue polypeptide: uncharacterized protein (383 aa).

Disordered regions lie at residues 1–30 (MDLC…PTCT), 114–144 (ETKP…STAS), 262–289 (GEKR…ARTS), and 341–360 (AKDP…NSPQ). Positions 10–26 (DLENGENNEIQSTEETE) are enriched in acidic residues. Residues 128–141 (SSPSQTQAAPQGPS) show a composition bias toward low complexity. Over residues 262–271 (GEKRPSELAK) the composition is skewed to basic and acidic residues.

This is an uncharacterized protein from Macaca fascicularis (Crab-eating macaque).